The sequence spans 349 residues: Histidinol-phosphate aminotransferase (349 aa).

N6-(pyridoxal phosphate)lysine is present on K210.

Belongs to the class-II pyridoxal-phosphate-dependent aminotransferase family. Histidinol-phosphate aminotransferase subfamily. As to quaternary structure, homodimer. Pyridoxal 5'-phosphate is required as a cofactor.

The enzyme catalyses L-histidinol phosphate + 2-oxoglutarate = 3-(imidazol-4-yl)-2-oxopropyl phosphate + L-glutamate. It functions in the pathway amino-acid biosynthesis; L-histidine biosynthesis; L-histidine from 5-phospho-alpha-D-ribose 1-diphosphate: step 7/9. This is Histidinol-phosphate aminotransferase from Flavobacterium johnsoniae (strain ATCC 17061 / DSM 2064 / JCM 8514 / BCRC 14874 / CCUG 350202 / NBRC 14942 / NCIMB 11054 / UW101) (Cytophaga johnsonae).